The chain runs to 394 residues: Cobalt-precorrin-5B C(1)-methyltransferase (394 aa).

This sequence belongs to the CbiD family.

It catalyses the reaction Co-precorrin-5B + S-adenosyl-L-methionine = Co-precorrin-6A + S-adenosyl-L-homocysteine. Its pathway is cofactor biosynthesis; adenosylcobalamin biosynthesis; cob(II)yrinate a,c-diamide from sirohydrochlorin (anaerobic route): step 6/10. Its function is as follows. Catalyzes the methylation of C-1 in cobalt-precorrin-5B to form cobalt-precorrin-6A. The chain is Cobalt-precorrin-5B C(1)-methyltransferase from Clostridium beijerinckii (strain ATCC 51743 / NCIMB 8052) (Clostridium acetobutylicum).